The sequence spans 269 residues: Shikimate dehydrogenase (NADP(+)) (269 aa).

Residues 17 to 19 (SKS) and threonine 64 contribute to the shikimate site. The Proton acceptor role is filled by lysine 68. An NADP(+)-binding site is contributed by glutamate 80. 2 residues coordinate shikimate: asparagine 89 and aspartate 105. NADP(+) contacts are provided by residues 130 to 134 (GAGGA), 154 to 159 (NRTHAK), and methionine 213. Position 215 (tyrosine 215) interacts with shikimate. Glycine 237 serves as a coordination point for NADP(+).

This sequence belongs to the shikimate dehydrogenase family. Homodimer.

It carries out the reaction shikimate + NADP(+) = 3-dehydroshikimate + NADPH + H(+). It functions in the pathway metabolic intermediate biosynthesis; chorismate biosynthesis; chorismate from D-erythrose 4-phosphate and phosphoenolpyruvate: step 4/7. Its function is as follows. Involved in the biosynthesis of the chorismate, which leads to the biosynthesis of aromatic amino acids. Catalyzes the reversible NADPH linked reduction of 3-dehydroshikimate (DHSA) to yield shikimate (SA). This Neisseria flavescens protein is Shikimate dehydrogenase (NADP(+)).